The following is a 292-amino-acid chain: Cbb3-type cytochrome c oxidase subunit CcoP (292 aa).

2 consecutive transmembrane segments (helical) span residues 11–31 and 62–82; these read FGLI…SSLI and VGWI…FFFG. Cytochrome c domains lie at 116-195 and 205-288; these read ELVD…MAEI and QLID…QSLK. Residues Cys-129, Cys-132, His-133, Met-174, Cys-219, Cys-222, His-223, and Met-264 each coordinate heme c.

Belongs to the CcoP / FixP family. Component of the cbb3-type cytochrome c oxidase at least composed of CcoN, CcoO, CcoQ and CcoP. It depends on heme c as a cofactor.

The protein localises to the cell inner membrane. It participates in energy metabolism; oxidative phosphorylation. Its function is as follows. C-type cytochrome. Part of the cbb3-type cytochrome c oxidase complex. CcoP subunit is required for transferring electrons from donor cytochrome c via its heme groups to CcoO subunit. From there, electrons are shuttled to the catalytic binuclear center of CcoN subunit where oxygen reduction takes place. The complex also functions as a proton pump. In Helicobacter pylori (Campylobacter pylori), this protein is Cbb3-type cytochrome c oxidase subunit CcoP.